Reading from the N-terminus, the 1434-residue chain is Protein patched homolog 1 (1434 aa).

The segment covering 1–13 has biased composition (low complexity); sequence MASAGNAAGALGR. The disordered stretch occupies residues 1–34; sequence MASAGNAAGALGRQAGGGRRRRTGGPHRAAPDRD. Residues 1 to 86 are Cytoplasmic-facing; the sequence is MASAGNAAGA…GCYIQKNCGK (86 aa). A helical transmembrane segment spans residues 87–107; that stretch reads FLVVGLLIFGAFAVGLKAANL. The Extracellular segment spans residues 108 to 422; sequence ETNVEELWVE…LDDILKSFSD (315 aa). Residues Asn127, Asn298, Asn335, and Asn400 are each glycosylated (N-linked (GlcNAc...) asparagine). The chain crosses the membrane as a helical span at residues 423-443; that stretch reads VSVIRVASGYLLMLAYACLTM. Residues 424–584 form the SSD domain; sequence SVIRVASGYL…LLIFPAILSM (161 aa). The Cytoplasmic segment spans residues 444–458; that stretch reads LRWDCSKSQGAVGLA. The helical transmembrane segment at 459–479 threads the bilayer; the sequence is GVLLVALSVAAGLGLCSLIGI. Residues 480–487 are Extracellular-facing; the sequence is SFNAATTQ. The helical transmembrane segment at 488-508 threads the bilayer; that stretch reads VLPFLALGVGVDDVFLLAHAF. The Cytoplasmic segment spans residues 509–533; it reads SETGQNKRIPFEDRTGECLKRTGAS. Residues 534–554 form a helical membrane-spanning segment; the sequence is VALTSISNVTAFFMAALIPIP. At 555–563 the chain is on the extracellular side; the sequence is ALRAFSLQA. A helical transmembrane segment spans residues 564 to 584; it reads AVVVVFNFAMVLLIFPAILSM. The Cytoplasmic portion of the chain corresponds to 585–734; sequence DLYRREDRRL…HYAPFLLKPK (150 aa). A helical transmembrane segment spans residues 735-755; it reads AKVVVILLFLGLLGVSLYGTT. Residues 756–1013 lie on the Extracellular side of the membrane; that stretch reads RVRDGLDLTD…WEQYISLRHW (258 aa). 2 N-linked (GlcNAc...) asparagine glycosylation sites follow: Asn861 and Asn986. Residues 1014 to 1034 form a helical membrane-spanning segment; sequence LLLSISVVLACTFLVCAVFLL. Residues 1035–1039 lie on the Cytoplasmic side of the membrane; it reads NPWTA. A helical transmembrane segment spans residues 1040 to 1060; the sequence is GIIVMVLALMTVELFGMMGLI. Topologically, residues 1061–1069 are extracellular; it reads GIKLSAVPV. The chain crosses the membrane as a helical span at residues 1070-1090; it reads VILIASVGIGVEFTVHVALAF. At 1091-1107 the chain is on the cytoplasmic side; the sequence is LTAIGDKNHRAMLALEH. A helical membrane pass occupies residues 1108-1128; the sequence is MFAPVLDGAVSTLLGVLMLAG. The Extracellular segment spans residues 1129–1140; that stretch reads SEFDFIVRYFFA. Residues 1141–1161 traverse the membrane as a helical segment; it reads VLAILTVLGVLNGLVLLPVLL. Residues 1162-1434 lie on the Cytoplasmic side of the membrane; the sequence is SFFGPCPEVS…EERPWGSSSN (273 aa). Disordered stretches follow at residues 1175 to 1219, 1257 to 1348, and 1368 to 1396; these read GLNR…TVSG, HPDS…SSVP, and HPPPGPGRNPRGGPCPGYESYPETDHGVF. Thr1181 bears the Phosphothreonine mark. Ser1183 carries the phosphoserine modification. Low complexity predominate over residues 1204–1213; the sequence is SDSSDSEYSS. A compositionally biased stretch (basic and acidic residues) spans 1288–1297; it reads PRRDPPREGL. The segment covering 1335–1348 has biased composition (polar residues); sequence PRNPTSTAMGSSVP. Residue Lys1413 forms a Glycyl lysine isopeptide (Lys-Gly) (interchain with G-Cter in ubiquitin) linkage.

This sequence belongs to the patched family. In terms of assembly, interacts with SNX17. Interacts with IHH. Interacts with G-protein coupled receptor GPR37L1. In terms of processing, glycosylation is necessary for SHH binding. Post-translationally, in the absence of Hh ligands, ubiquitination by ITCH at Lys-1413 promotes endocytosis and both proteasomal and lysosomal degradation. As to expression, detected in cerebellar Bergmann glia cells (at protein level). In the developing embryo, first detected within the ventral neural tube and later in the somites and limb buds. Expression in the limb buds is restricted to the posterior ectoderm surrounding the zone of polarizing activity. In the adult, expression is seen in brain, lung, liver, kidney and ocular tissues; lower levels in heart, skeletal muscle, and testis.

Its subcellular location is the cell membrane. Functionally, acts as a receptor for sonic hedgehog (SHH), indian hedgehog (IHH) and desert hedgehog (DHH). Associates with the smoothened protein (SMO) to transduce the hedgehog's proteins signal. Seems to have a tumor suppressor function, as inactivation of this protein is probably a necessary, if not sufficient step for tumorigenesis. This chain is Protein patched homolog 1 (Ptch1), found in Mus musculus (Mouse).